Reading from the N-terminus, the 502-residue chain is UDP-N-acetylmuramate--L-alanine ligase (502 aa).

ATP is bound at residue 119–125 (GSHGKST).

The protein belongs to the MurCDEF family.

It is found in the cytoplasm. It catalyses the reaction UDP-N-acetyl-alpha-D-muramate + L-alanine + ATP = UDP-N-acetyl-alpha-D-muramoyl-L-alanine + ADP + phosphate + H(+). It participates in cell wall biogenesis; peptidoglycan biosynthesis. In terms of biological role, cell wall formation. This Frankia casuarinae (strain DSM 45818 / CECT 9043 / HFP020203 / CcI3) protein is UDP-N-acetylmuramate--L-alanine ligase.